The sequence spans 207 residues: Putative 3-methyladenine DNA glycosylase (207 aa).

It belongs to the DNA glycosylase MPG family.

This is Putative 3-methyladenine DNA glycosylase from Burkholderia lata (strain ATCC 17760 / DSM 23089 / LMG 22485 / NCIMB 9086 / R18194 / 383).